Consider the following 446-residue polypeptide: Tubulin alpha-1B chain (446 aa).

GTP is bound at residue glutamine 11. Residues 34-55 (GRLMDDSPSKHDSGSTFFSETG) are disordered. Positions 35-46 (RLMDDSPSKHDS) are enriched in basic and acidic residues. GTP-binding residues include glutamate 69, serine 138, glycine 142, threonine 143, serine 177, asparagine 204, and asparagine 226. Residue glutamate 69 coordinates Mg(2+). Glutamate 252 is a catalytic residue.

The protein belongs to the tubulin family. In terms of assembly, dimer of alpha and beta chains. A typical microtubule is a hollow water-filled tube with an outer diameter of 25 nm and an inner diameter of 15 nM. Alpha-beta heterodimers associate head-to-tail to form protofilaments running lengthwise along the microtubule wall with the beta-tubulin subunit facing the microtubule plus end conferring a structural polarity. Microtubules usually have 13 protofilaments but different protofilament numbers can be found in some organisms and specialized cells. Requires Mg(2+) as cofactor.

The protein localises to the cytoplasm. Its subcellular location is the cytoskeleton. The enzyme catalyses GTP + H2O = GDP + phosphate + H(+). Tubulin is the major constituent of microtubules, a cylinder consisting of laterally associated linear protofilaments composed of alpha- and beta-tubulin heterodimers. Microtubules grow by the addition of GTP-tubulin dimers to the microtubule end, where a stabilizing cap forms. Below the cap, tubulin dimers are in GDP-bound state, owing to GTPase activity of alpha-tubulin. This is Tubulin alpha-1B chain (TUB-1B) from Schizophyllum commune (Split gill fungus).